We begin with the raw amino-acid sequence, 315 residues long: MACTEFSFHVPSLEELAEVLQKGLKDNFAHVQVSVVDCPDLTKEPFTFPVKGICGQTRIAEVGGVPYLLPLVNKKKVYDLNEIAKEIKLPGAFILGAGAGPFQTLGFNSEFMPIVQTASEHHQPVNGSYFARANPADGKCLLEKYSQKYPDFGCALLANLFASEGQPGKVIEVQAKKRTGEHNFVSCMRQTLEKHYGDKPVGMGGTFLVQKGKVKAHIMPAEFSSCSLNSDEAVNQWLNFYEMKAPLVCLPVFVSKDPGLDLRLEHTHFFSHHGEGGHYHYDTTPDTVEYLGYFSPAQFLYRIDQPKETHAFGRD.

Positions 266, 268, and 278 each coordinate Zn(2+).

Monomer. Zn(2+) is required as a cofactor.

It localises to the nucleus. The protein resides in the cytoplasm. Exhibits ester hydrolase activity on the substrate p-nitrophenyl acetate, in vitro. Regulates DNA damage and repair by regulating HIF1A degradation via chaperone-mediated autophagy (CMA). The chain is Ester hydrolase C11orf54 homolog from Rattus norvegicus (Rat).